We begin with the raw amino-acid sequence, 219 residues long: Charged multivesicular body protein 5 (219 aa).

The segment covering 1–10 (MNRLFGKAKP) has biased composition (basic residues). Residues 1-21 (MNRLFGKAKPKAPPPSLTDCI) are disordered. Lys-7 carries (Microbial infection) N6-stearoyl lysine lipidation. A coiled-coil region spans residues 26–179 (SRAESIDKKI…LGDELLADED (154 aa)). Ser-86 is modified (phosphoserine). Residues 121–158 (KQVKIDQIEDLQDQLEDMMEDANEIQEALSRSYGTPEL) are interaction with VTA1. The interval 188–219 (SAPAIPEGVPTDTKNKDGVLVDEFGLPQIPAS) is disordered.

The protein belongs to the SNF7 family. Probable peripherally associated component of the endosomal sorting required for transport complex III (ESCRT-III). ESCRT-III components are thought to multimerize to form a flat lattice on the perimeter membrane of the endosome. Several assembly forms of ESCRT-III may exist that interact and act sequentially. Interacts with VTA1; the interaction involves soluble CHMP5. Interacts with CHMP2A. Interacts with NOD2. Interacts with BROX. Post-translationally, (Microbial infection) Stearoylated By S.flexneri N-epsilon-fatty acyltransferase IcsB, promoting S.flexneri evasion of autophagy. ISGylated. Isgylation inhibits its interaction with VTA1.

It is found in the cytoplasm. The protein localises to the cytosol. Its subcellular location is the endosome membrane. It localises to the midbody. Functionally, probable peripherally associated component of the endosomal sorting required for transport complex III (ESCRT-III) which is involved in multivesicular bodies (MVBs) formation and sorting of endosomal cargo proteins into MVBs. MVBs contain intraluminal vesicles (ILVs) that are generated by invagination and scission from the limiting membrane of the endosome and mostly are delivered to lysosomes enabling degradation of membrane proteins, such as stimulated growth factor receptors, lysosomal enzymes and lipids. The MVB pathway appears to require the sequential function of ESCRT-O, -I,-II and -III complexes. ESCRT-III proteins mostly dissociate from the invaginating membrane before the ILV is released. The ESCRT machinery also functions in topologically equivalent membrane fission events, such as the terminal stages of cytokinesis and the budding of enveloped viruses (HIV-1 and other lentiviruses). ESCRT-III proteins are believed to mediate the necessary vesicle extrusion and/or membrane fission activities, possibly in conjunction with the AAA ATPase VPS4. Involved in HIV-1 p6- and p9-dependent virus release. The protein is Charged multivesicular body protein 5 (CHMP5) of Homo sapiens (Human).